A 353-amino-acid chain; its full sequence is Trans-enoyl reductase fsa3 (353 aa).

An NADP(+)-binding site is contributed by 45-48 (VDTK). 131–138 (ISFMTTGL) is a binding site for substrate. NADP(+) is bound by residues 166-169 (SSAT), 189-192 (SPRN), Y207, and 254-255 (LE). 275–279 (GPQML) contributes to the substrate binding site. An NADP(+)-binding site is contributed by 344–345 (IS).

Belongs to the zinc-containing alcohol dehydrogenase family. As to quaternary structure, monomer.

It catalyses the reaction L-serine + 7 malonyl-CoA + acetyl-CoA + 2 S-adenosyl-L-methionine + ATP + 8 NADPH + 11 H(+) = (5S)-3-[(2E,6R,8E,10E,12E)-2,6-dimethyltetradeca-2,8,10,12-tetraenoyl]-5-(hydroxymethyl)pyrrolidine-2,4-dione + AMP + 2 S-adenosyl-L-homocysteine + 7 CO2 + diphosphate + 8 NADP(+) + 8 CoA + 6 H2O. It functions in the pathway mycotoxin biosynthesis. Its function is as follows. Trans-enoyl reductase; part of the gene cluster that mediates the biosynthesis of HIV-1 integrase inhibitor equisetin and of fusarisetin A, both trans-fused decalin-containing tetramic acids showing also antimicrobial activity. The PKS module of fsa1 together with the enoylreductase fsa3 catalyze the formation of the polyketide unit which is then conjugated to L-serine by the condensation domain of the fsa1 NRPS module. Activity of the Dieckmann cyclase domain (RED) results in release of the Dieckmann product intermediate. Diels-Alderase fsa2 is involved in endo-selective Diels-Alder cycloaddition to form the decalin ring, leading to the production of N-desmethylequisetin also called trichosetin. Subsequent N-methylation is carried out by fsa4 to give equisetin. The enzymatic gene responsible for the conversion of equisetin to fusarisetin A has not been identified yet and is probably located outside of the fsa cluster. The chain is Trans-enoyl reductase fsa3 from Fusarium sp. (strain FN080326).